The sequence spans 261 residues: DNA repair protein RecO (261 aa).

Belongs to the RecO family.

Functionally, involved in DNA repair and RecF pathway recombination. This chain is DNA repair protein RecO, found in Mycobacteroides abscessus (strain ATCC 19977 / DSM 44196 / CCUG 20993 / CIP 104536 / JCM 13569 / NCTC 13031 / TMC 1543 / L948) (Mycobacterium abscessus).